Here is a 999-residue protein sequence, read N- to C-terminus: RING finger domain and kelch repeat-containing protein DDB_G0271372 (999 aa).

The segment at 7–49 (CPNCLKVFNNPRQLECDHILCTRCIEGVYNPGRTPIIKCPVCD) adopts an RING-type zinc-finger fold. Low complexity predominate over residues 92-143 (STGSSNNNNNNNNNNNNNNNNFVINNSNNKNNGATTTTTTTTTTTNSNSNST). 2 disordered regions span residues 92–147 (STGS…KSKV) and 159–209 (ASPK…SSPP). Polar residues predominate over residues 165–196 (GSSQGSLTTINNQKKLTLSPQRASSTTTTSVN). The B box-type zinc-finger motif lies at 258-302 (AELSKCNDHDQKKFTIFCTDCDQLLCDECLNNNQQQHENHQLNKI). Zn(2+) contacts are provided by cysteine 263, histidine 266, cysteine 286, and histidine 294. A coiled-coil region spans residues 355–402 (DIDTMIENLKERKNALISQIDKEYEEQKLELKDQIETINTTIVDIQNN). Low complexity-rich tracts occupy residues 485–516 (GVSS…IITT) and 526–536 (SPSPTSSSSST). The tract at residues 485–637 (GVSSSPTGTG…TSTNGSNTKI (153 aa)) is disordered. Residues 552-612 (LSSQNYDNFG…SHGSKLNDNI (61 aa)) show a composition bias toward polar residues. Low complexity predominate over residues 613–635 (NTNNNNSPSPTSSSTTSTNGSNT). Kelch repeat units lie at residues 655-700 (ITAR…YDNN), 702-745 (TIYR…VFDG), 748-793 (YIYL…YHPT), 796-842 (CIYV…FDGS), and 844-892 (YINI…SMNL). Over residues 904–924 (NSFSSISSHSSLNSSSSNNGI) the composition is skewed to low complexity. Residues 904-936 (NSFSSISSHSSLNSSSSNNGISGSGGSGGDNEI) form a disordered region.

The polypeptide is RING finger domain and kelch repeat-containing protein DDB_G0271372 (Dictyostelium discoideum (Social amoeba)).